A 133-amino-acid polypeptide reads, in one-letter code: Small ribosomal subunit protein uS8 (133 aa).

It belongs to the universal ribosomal protein uS8 family. In terms of assembly, part of the 30S ribosomal subunit. Contacts proteins S5 and S12.

Functionally, one of the primary rRNA binding proteins, it binds directly to 16S rRNA central domain where it helps coordinate assembly of the platform of the 30S subunit. The chain is Small ribosomal subunit protein uS8 from Synechococcus sp. (strain WH7803).